A 277-amino-acid polypeptide reads, in one-letter code: Eukaryotic translation initiation factor 3 subunit J (277 aa).

A disordered region spans residues 1–80 (MSWDDEDFAV…PAATKNTMLD (80 aa)). Positions 23-43 (WDDEFAENDDEPVLESWEDEE) are enriched in acidic residues. Positions 50-75 (KAAAAAAAKAPKKASPSPAATPAATK) are enriched in low complexity. Residues 199–230 (TVENIRQTIATLNVLMKDKEREERQARLAKVK) are a coiled coil. The disordered stretch occupies residues 257–277 (DNDFDLGGNDNFDDFGEDDFM). Residues 267–277 (NFDDFGEDDFM) show a composition bias toward acidic residues.

This sequence belongs to the eIF-3 subunit J family. As to quaternary structure, component of the eukaryotic translation initiation factor 3 (eIF-3) complex.

The protein localises to the cytoplasm. Component of the eukaryotic translation initiation factor 3 (eIF-3) complex, which is involved in protein synthesis of a specialized repertoire of mRNAs and, together with other initiation factors, stimulates binding of mRNA and methionyl-tRNAi to the 40S ribosome. The eIF-3 complex specifically targets and initiates translation of a subset of mRNAs involved in cell proliferation. The sequence is that of Eukaryotic translation initiation factor 3 subunit J from Kluyveromyces lactis (strain ATCC 8585 / CBS 2359 / DSM 70799 / NBRC 1267 / NRRL Y-1140 / WM37) (Yeast).